The sequence spans 325 residues: Metacaspase-9 (325 aa).

Catalysis depends on residues H95 and C147. Position 147 is an S-nitrosocysteine (C147). N177 is a glycosylation site (N-linked (GlcNAc...) asparagine).

This sequence belongs to the peptidase C14B family. In terms of processing, the two subunits are derived from the precursor sequence by an autocatalytic mechanism. Post-translationally, S-nitrosylation at Cys-147 suppresses both autoprocessing and proteolytic activity of the full-length protein, but does not affect the activity of the mature processed form. As to expression, expressed in root tips, cauline leaves, flowers and siliques.

The protein localises to the secreted. It is found in the extracellular space. It localises to the apoplast. With respect to regulation, inhibited by serpin ZX and nitric oxide through cysteine nitrosylation. In terms of biological role, cysteine protease that cleaves specifically after arginine or lysine residues. Does not cleave caspase-specific substrates. Required for proteolytic processing of GRI. This Arabidopsis thaliana (Mouse-ear cress) protein is Metacaspase-9 (AMC9).